Consider the following 66-residue polypeptide: Beta-defensin 107A (66 aa).

A signal peptide spans 1 to 22 (MKIFFFIFAALILLAQIFQART). 2 disulfides stabilise this stretch: cysteine 37-cysteine 51 and cysteine 41-cysteine 60.

Belongs to the beta-defensin family.

Its subcellular location is the secreted. In terms of biological role, has antibacterial activity. This chain is Beta-defensin 107A (DEFB107A), found in Macaca fascicularis (Crab-eating macaque).